The sequence spans 336 residues: Holliday junction branch migration complex subunit RuvB (336 aa).

Residues 4–185 (ADRLISADIQ…FGIVQRLEFY (182 aa)) form a large ATPase domain (RuvB-L) region. Residues I24, R25, G66, K69, T70, T71, 132-134 (EDY), R175, Y185, and R222 contribute to the ATP site. T70 contacts Mg(2+). The interval 186 to 256 (NVDDLQHIVA…IASKALDMLN (71 aa)) is small ATPAse domain (RuvB-S). The segment at 259-336 (AAGFDYLDRK…RHFNRIMEAP (78 aa)) is head domain (RuvB-H). R295, R314, and R319 together coordinate DNA.

The protein belongs to the RuvB family. As to quaternary structure, homohexamer. Forms an RuvA(8)-RuvB(12)-Holliday junction (HJ) complex. HJ DNA is sandwiched between 2 RuvA tetramers; dsDNA enters through RuvA and exits via RuvB. An RuvB hexamer assembles on each DNA strand where it exits the tetramer. Each RuvB hexamer is contacted by two RuvA subunits (via domain III) on 2 adjacent RuvB subunits; this complex drives branch migration. In the full resolvosome a probable DNA-RuvA(4)-RuvB(12)-RuvC(2) complex forms which resolves the HJ.

The protein localises to the cytoplasm. The catalysed reaction is ATP + H2O = ADP + phosphate + H(+). Functionally, the RuvA-RuvB-RuvC complex processes Holliday junction (HJ) DNA during genetic recombination and DNA repair, while the RuvA-RuvB complex plays an important role in the rescue of blocked DNA replication forks via replication fork reversal (RFR). RuvA specifically binds to HJ cruciform DNA, conferring on it an open structure. The RuvB hexamer acts as an ATP-dependent pump, pulling dsDNA into and through the RuvAB complex. RuvB forms 2 homohexamers on either side of HJ DNA bound by 1 or 2 RuvA tetramers; 4 subunits per hexamer contact DNA at a time. Coordinated motions by a converter formed by DNA-disengaged RuvB subunits stimulates ATP hydrolysis and nucleotide exchange. Immobilization of the converter enables RuvB to convert the ATP-contained energy into a lever motion, pulling 2 nucleotides of DNA out of the RuvA tetramer per ATP hydrolyzed, thus driving DNA branch migration. The RuvB motors rotate together with the DNA substrate, which together with the progressing nucleotide cycle form the mechanistic basis for DNA recombination by continuous HJ branch migration. Branch migration allows RuvC to scan DNA until it finds its consensus sequence, where it cleaves and resolves cruciform DNA. The sequence is that of Holliday junction branch migration complex subunit RuvB from Proteus mirabilis (strain HI4320).